The chain runs to 305 residues: tRNA pseudouridine synthase B (305 aa).

Catalysis depends on aspartate 39, which acts as the Nucleophile.

This sequence belongs to the pseudouridine synthase TruB family. Type 1 subfamily.

The enzyme catalyses uridine(55) in tRNA = pseudouridine(55) in tRNA. Responsible for synthesis of pseudouridine from uracil-55 in the psi GC loop of transfer RNAs. The protein is tRNA pseudouridine synthase B of Staphylococcus saprophyticus subsp. saprophyticus (strain ATCC 15305 / DSM 20229 / NCIMB 8711 / NCTC 7292 / S-41).